Consider the following 252-residue polypeptide: Transcriptional regulatory protein HptR (252 aa).

One can recognise a Response regulatory domain in the interval 3 to 118 (KVVICDDERI…QLEVILGRLV (116 aa)). Asp-55 is subject to 4-aspartylphosphate. The HTH araC/xylS-type domain occupies 153–250 (NQIVDQIKQS…QMSPSDYCKQ (98 aa)). DNA-binding regions (H-T-H motif) lie at residues 170–191 (SDLI…KDHV) and 217–240 (HYEI…KKYL).

Phosphorylated by HptS.

The protein localises to the cytoplasm. Member of the two-component regulatory system HptS/HptR that regulates genes involved in hexose phosphate transport system in response to changes in extracellular phosphate sources. Activates uhpT expression to facilitate glucose-6-phosphate/G6P utilization by directly binding to its promoter. Antagonizes CcpA-dependent transcription of a subset of CcpA-regulated genes involved in antibiotic susceptibility. The chain is Transcriptional regulatory protein HptR (hptR) from Staphylococcus aureus (strain NCTC 8325 / PS 47).